Reading from the N-terminus, the 45-residue chain is MSKRTFQPNNRRRAKKHGFRLRMRTRAGRAILAARRGKGRTELSA.

This sequence belongs to the bacterial ribosomal protein bL34 family.

The sequence is that of Large ribosomal subunit protein bL34 from Arthrobacter sp. (strain FB24).